The following is a 201-amino-acid chain: Probable quinol oxidase subunit 3 (201 aa).

Transmembrane regions (helical) follow at residues 20-40 (LGFW…FATL), 62-82 (LVLI…IAIY), 91-111 (LMLI…GFEI), 133-153 (FFIL…WIIC), and 180-200 (FLDV…MVFS).

The protein belongs to the cytochrome c oxidase subunit 3 family.

It is found in the cell membrane. It carries out the reaction 2 a quinol + O2 = 2 a quinone + 2 H2O. Catalyzes quinol oxidation with the concomitant reduction of oxygen to water. This is Probable quinol oxidase subunit 3 (qoxC) from Staphylococcus saprophyticus subsp. saprophyticus (strain ATCC 15305 / DSM 20229 / NCIMB 8711 / NCTC 7292 / S-41).